A 786-amino-acid polypeptide reads, in one-letter code: uncharacterized protein (786 aa).

Position 361 to 362 (361 to 362 (WD)) interacts with substrate. The Proton donor role is filled by Glu488. 590 to 591 (KQ) contributes to the substrate binding site. Residues 762–786 (TRKPLLPPPPQPPGREPVHRRALAR) form a disordered region. Over residues 766–776 (LLPPPPQPPGR) the composition is skewed to pro residues.

Belongs to the glycosyl hydrolase 65 family.

This is an uncharacterized protein from Mycobacterium tuberculosis (strain CDC 1551 / Oshkosh).